Reading from the N-terminus, the 483-residue chain is Regulatory protein ViaA (483 aa).

Belongs to the ViaA family. Homodimer. Interacts with RavA.

Its subcellular location is the cytoplasm. Functionally, component of the RavA-ViaA chaperone complex, which may act on the membrane to optimize the function of some of the respiratory chains. ViaA stimulates the ATPase activity of RavA. The sequence is that of Regulatory protein ViaA from Salmonella heidelberg (strain SL476).